The chain runs to 256 residues: uncharacterized protein (256 aa).

The protein to B.subtilis LplA.

This is an uncharacterized protein from Niallia circulans (Bacillus circulans).